The primary structure comprises 598 residues: DNA ligase (598 aa).

Aspartate 258 is a binding site for ATP. The active-site N6-AMP-lysine intermediate is lysine 260. Residues arginine 265, arginine 280, glutamate 310, phenylalanine 350, arginine 427, and lysine 433 each contribute to the ATP site.

Belongs to the ATP-dependent DNA ligase family. Requires Mg(2+) as cofactor.

The catalysed reaction is ATP + (deoxyribonucleotide)n-3'-hydroxyl + 5'-phospho-(deoxyribonucleotide)m = (deoxyribonucleotide)n+m + AMP + diphosphate.. Its function is as follows. DNA ligase that seals nicks in double-stranded DNA during DNA replication, DNA recombination and DNA repair. This is DNA ligase from Sulfolobus acidocaldarius (strain ATCC 33909 / DSM 639 / JCM 8929 / NBRC 15157 / NCIMB 11770).